Reading from the N-terminus, the 308-residue chain is D-alanine--D-alanine ligase (308 aa).

Residues lysine 102–glutamate 302 enclose the ATP-grasp domain. Proline 128–threonine 183 is a binding site for ATP. Aspartate 252, glutamate 269, and asparagine 271 together coordinate Mg(2+).

It belongs to the D-alanine--D-alanine ligase family. Mg(2+) is required as a cofactor. It depends on Mn(2+) as a cofactor.

The protein localises to the cytoplasm. It carries out the reaction 2 D-alanine + ATP = D-alanyl-D-alanine + ADP + phosphate + H(+). It participates in cell wall biogenesis; peptidoglycan biosynthesis. Functionally, cell wall formation. This chain is D-alanine--D-alanine ligase, found in Sinorhizobium medicae (strain WSM419) (Ensifer medicae).